Here is a 202-residue protein sequence, read N- to C-terminus: Imidazoleglycerol-phosphate dehydratase (202 aa).

This sequence belongs to the imidazoleglycerol-phosphate dehydratase family.

It is found in the cytoplasm. It carries out the reaction D-erythro-1-(imidazol-4-yl)glycerol 3-phosphate = 3-(imidazol-4-yl)-2-oxopropyl phosphate + H2O. It functions in the pathway amino-acid biosynthesis; L-histidine biosynthesis; L-histidine from 5-phospho-alpha-D-ribose 1-diphosphate: step 6/9. The chain is Imidazoleglycerol-phosphate dehydratase from Brucella suis (strain ATCC 23445 / NCTC 10510).